A 468-amino-acid chain; its full sequence is VGFKXGVXEYKLTYYTPEXETKDTDILAAFRVTPQPGVPPEEAGXAVAAESSTGTWTTVWTDGLTSLDRYKGRCYHIEPVPGEADQYICYVAYPLDLFEEGSVTNMFTSIVGNVFGFKALRALRLEDLRIPPAYIKTFQGPPHGIQVERDKLNKYGRPLLGCTIKPKLGLSAKNYGRAVYECLRGGLDFTKDDENVNSQPFMRWRDRFLFCAEALYKAQAETGEIKGHYLNATAGTCEEMIKRAVFARELGVPIVMHDYLTGGFTANTSLAHYCRDNGLLLHIHRAMHAVIDRQKNHGIHFRVLAKALRMSGGDHIHAGTVVGKLEGERDITLGFVDLLRDDFIEKDRSRGIYFTQDWVSLPGVIPVASGGIHVWHMPALTEIFGDXSVLQFGGGTLGXPWGNAPGAVANRVALEACVKARNEGRDLAAEGNTIIREASKWSPELAAACEVWKEIKFEFAAVDTLDRE.

Residue lysine 4 is modified to N6,N6,N6-trimethyllysine. Residues asparagine 113 and threonine 163 each coordinate substrate. Catalysis depends on lysine 165, which acts as the Proton acceptor. Lysine 167 is a substrate binding site. The Mg(2+) site is built by lysine 191, aspartate 193, and glutamate 194. Position 191 is an N6-carboxylysine (lysine 191). Histidine 284 acts as the Proton acceptor in catalysis. Substrate-binding residues include arginine 285, histidine 317, and serine 369.

The protein belongs to the RuBisCO large chain family. Type I subfamily. Heterohexadecamer of 8 large chains and 8 small chains; disulfide-linked. The disulfide link is formed within the large subunit homodimers. The cofactor is Mg(2+). Post-translationally, the disulfide bond which can form in the large chain dimeric partners within the hexadecamer appears to be associated with oxidative stress and protein turnover.

The protein localises to the plastid. The protein resides in the chloroplast. It catalyses the reaction 2 (2R)-3-phosphoglycerate + 2 H(+) = D-ribulose 1,5-bisphosphate + CO2 + H2O. The enzyme catalyses D-ribulose 1,5-bisphosphate + O2 = 2-phosphoglycolate + (2R)-3-phosphoglycerate + 2 H(+). In terms of biological role, ruBisCO catalyzes two reactions: the carboxylation of D-ribulose 1,5-bisphosphate, the primary event in carbon dioxide fixation, as well as the oxidative fragmentation of the pentose substrate in the photorespiration process. Both reactions occur simultaneously and in competition at the same active site. This Pandorea jasminoides (Bower vine) protein is Ribulose bisphosphate carboxylase large chain.